A 188-amino-acid chain; its full sequence is UPF0200 protein M164_1169 (188 aa).

15-22 (GMPGSGKS) serves as a coordination point for ATP.

The protein belongs to the UPF0200 family.

The sequence is that of UPF0200 protein M164_1169 from Saccharolobus islandicus (strain M.16.4 / Kamchatka #3) (Sulfolobus islandicus).